A 536-amino-acid chain; its full sequence is Chorismate synthase (536 aa).

The active site involves histidine 17. The interval 37 to 59 (EDVQPQLNRRRPGQGPLSTQRRE) is disordered. Residue histidine 104 is part of the active site. The segment at 344-377 (ERDGCSAATLSRERASDGRTTSRHEEEVERGRER) is disordered. The span at 354-377 (SRERASDGRTTSRHEEEVERGRER) shows a compositional bias: basic and acidic residues. Aspartate 489 is an active-site residue.

This sequence belongs to the chorismate synthase family. FMNH2 is required as a cofactor.

The enzyme catalyses 5-O-(1-carboxyvinyl)-3-phosphoshikimate = chorismate + phosphate. It catalyses the reaction FMNH2 + NADP(+) = FMN + NADPH + 2 H(+). The protein operates within metabolic intermediate biosynthesis; chorismate biosynthesis; chorismate from D-erythrose 4-phosphate and phosphoenolpyruvate: step 7/7. Functionally, bifunctional chorismate synthase and flavin reductase. Catalyzes the conversion of 5-enolpyruvylshikimate 3-phosphate (EPSP) to form chorismate. Acts also as a flavin reductase (FR) able to generate reduced flavin mononucleotide in the presence of NADPH. In Toxoplasma gondii, this protein is Chorismate synthase (AROC).